The following is a 144-amino-acid chain: Granulocyte-macrophage colony-stimulating factor (144 aa).

The first 17 residues, M1–S17, serve as a signal peptide directing secretion. An O-linked (GalNAc...) serine glycan is attached at S24. T27 is a glycosylation site (O-linked (GalNAc...) threonine). N-linked (GlcNAc...) asparagine glycans are attached at residues N44, N47, and N54. Intrachain disulfides connect C71/C113 and C105/C138.

Belongs to the GM-CSF family. As to quaternary structure, monomer. The signaling GM-CSF receptor complex is a dodecamer of two head-to-head hexamers of two alpha, two beta, and two ligand subunits.

It localises to the secreted. Its function is as follows. Cytokine that stimulates the growth and differentiation of hematopoietic precursor cells from various lineages, including granulocytes, macrophages, eosinophils and erythrocytes. This is Granulocyte-macrophage colony-stimulating factor (CSF2) from Sus scrofa (Pig).